Consider the following 119-residue polypeptide: Nucleoid-associated protein Cphy_0047 (119 aa).

The disordered stretch occupies residues 23–45 (AQRMQKQMEDKTKEMEEKQWEAT). Residues 28 to 42 (KQMEDKTKEMEEKQW) are compositionally biased toward basic and acidic residues.

This sequence belongs to the YbaB/EbfC family. As to quaternary structure, homodimer.

It is found in the cytoplasm. Its subcellular location is the nucleoid. In terms of biological role, binds to DNA and alters its conformation. May be involved in regulation of gene expression, nucleoid organization and DNA protection. This Lachnoclostridium phytofermentans (strain ATCC 700394 / DSM 18823 / ISDg) (Clostridium phytofermentans) protein is Nucleoid-associated protein Cphy_0047.